Here is a 710-residue protein sequence, read N- to C-terminus: F-box only protein 40 (710 aa).

The segment at E53–N114 adopts a TRAF-type zinc-finger fold. 2 disordered regions span residues D152 to G174 and G234 to L279. Basic and acidic residues predominate over residues K238–G248. One can recognise an F-box domain in the interval L572–K626.

In terms of assembly, directly interacts with SKP1 and CUL1. Expressed only in heart and skeletal muscle.

It localises to the cytoplasm. Probable substrate-recognition component of the SCF (SKP1-CUL1-F-box protein)-type E3 ubiquitin ligase complex that may function in myogenesis. The chain is F-box only protein 40 (Fbxo40) from Mus musculus (Mouse).